The sequence spans 291 residues: Hydroxysteroid 11-beta-dehydrogenase 1-like protein B (291 aa).

A signal peptide spans 1–17 (MAGVILLLLSLCVGYIA). Residues 40–66 (GSST…TARR), 91–92 (DM), and 118–120 (NHI) each bind NADP(+). Position 170 (Ser-170) interacts with substrate. Tyr-183 acts as the Proton acceptor in catalysis. Residues 183-187 (YCASK) and 216-222 (GYIDTEN) each bind NADP(+).

It belongs to the short-chain dehydrogenases/reductases (SDR) family.

The protein resides in the secreted. The catalysed reaction is cortisone + NADPH + H(+) = cortisol + NADP(+). In terms of biological role, unidirectional NADP(+)-dependent cortisol dehydrogenase (in vitro). The chain is Hydroxysteroid 11-beta-dehydrogenase 1-like protein B (hsd11b1l-b) from Xenopus laevis (African clawed frog).